We begin with the raw amino-acid sequence, 315 residues long: Prephenate dehydratase (315 aa).

The Prephenate dehydratase domain occupies 3–189; it reads RIAYLGPEGT…ARTRFVLVGP (187 aa). The region spanning 203–280 is the ACT domain; the sequence is SVVLRIDNAP…ADVRYLGSWP (78 aa).

Homodimer.

It carries out the reaction prephenate + H(+) = 3-phenylpyruvate + CO2 + H2O. The protein operates within amino-acid biosynthesis; L-phenylalanine biosynthesis; phenylpyruvate from prephenate: step 1/1. This Mycobacterium avium (strain 104) protein is Prephenate dehydratase (pheA).